A 221-amino-acid chain; its full sequence is ATP phosphoribosyltransferase (221 aa).

It belongs to the ATP phosphoribosyltransferase family. Short subfamily. As to quaternary structure, heteromultimer composed of HisG and HisZ subunits.

The protein localises to the cytoplasm. The catalysed reaction is 1-(5-phospho-beta-D-ribosyl)-ATP + diphosphate = 5-phospho-alpha-D-ribose 1-diphosphate + ATP. It functions in the pathway amino-acid biosynthesis; L-histidine biosynthesis; L-histidine from 5-phospho-alpha-D-ribose 1-diphosphate: step 1/9. Functionally, catalyzes the condensation of ATP and 5-phosphoribose 1-diphosphate to form N'-(5'-phosphoribosyl)-ATP (PR-ATP). Has a crucial role in the pathway because the rate of histidine biosynthesis seems to be controlled primarily by regulation of HisG enzymatic activity. This Anaeromyxobacter dehalogenans (strain 2CP-C) protein is ATP phosphoribosyltransferase.